A 423-amino-acid chain; its full sequence is Histidine--tRNA ligase (423 aa).

Belongs to the class-II aminoacyl-tRNA synthetase family. As to quaternary structure, homodimer.

It is found in the cytoplasm. The catalysed reaction is tRNA(His) + L-histidine + ATP = L-histidyl-tRNA(His) + AMP + diphosphate + H(+). The polypeptide is Histidine--tRNA ligase (Orientia tsutsugamushi (strain Ikeda) (Rickettsia tsutsugamushi)).